The sequence spans 925 residues: Protein translocase subunit SecA (925 aa).

ATP-binding positions include Gln87, Gly105–Thr109, and Asp531. The segment at Ala867–Pro909 is disordered. Positions Gln895 to Arg906 are enriched in basic and acidic residues. Residues Cys910, Cys912, Cys921, and His922 each coordinate Zn(2+).

It belongs to the SecA family. In terms of assembly, monomer and homodimer. Part of the essential Sec protein translocation apparatus which comprises SecA, SecYEG and auxiliary proteins SecDF-YajC and YidC. The cofactor is Zn(2+).

Its subcellular location is the cell inner membrane. It localises to the cytoplasm. It catalyses the reaction ATP + H2O + cellular proteinSide 1 = ADP + phosphate + cellular proteinSide 2.. Functionally, part of the Sec protein translocase complex. Interacts with the SecYEG preprotein conducting channel. Has a central role in coupling the hydrolysis of ATP to the transfer of proteins into and across the cell membrane, serving both as a receptor for the preprotein-SecB complex and as an ATP-driven molecular motor driving the stepwise translocation of polypeptide chains across the membrane. The chain is Protein translocase subunit SecA from Thioalkalivibrio sulfidiphilus (strain HL-EbGR7).